We begin with the raw amino-acid sequence, 180 residues long: UPF0340 protein LL0489 (180 aa).

The protein belongs to the UPF0340 family.

The chain is UPF0340 protein LL0489 (yeiF) from Lactococcus lactis subsp. lactis (strain IL1403) (Streptococcus lactis).